The sequence spans 152 residues: Large ribosomal subunit protein eL14 (152 aa).

Belongs to the eukaryotic ribosomal protein eL14 family.

The sequence is that of Large ribosomal subunit protein eL14 (RPL14) from Lumbricus rubellus (Humus earthworm).